A 1498-amino-acid chain; its full sequence is DNA-directed RNA polymerase subunit beta' (1498 aa).

Residues Cys-67, Cys-69, Cys-82, and Cys-85 each contribute to the Zn(2+) site. The Mg(2+) site is built by Asp-499, Asp-501, and Asp-503. The Zn(2+) site is built by Cys-867, Cys-943, Cys-950, and Cys-953.

Belongs to the RNA polymerase beta' chain family. The RNAP catalytic core consists of 2 alpha, 1 beta, 1 beta' and 1 omega subunit. When a sigma factor is associated with the core the holoenzyme is formed, which can initiate transcription. The cofactor is Mg(2+). Zn(2+) is required as a cofactor.

It catalyses the reaction RNA(n) + a ribonucleoside 5'-triphosphate = RNA(n+1) + diphosphate. DNA-dependent RNA polymerase catalyzes the transcription of DNA into RNA using the four ribonucleoside triphosphates as substrates. The polypeptide is DNA-directed RNA polymerase subunit beta' (Chlorobium phaeobacteroides (strain BS1)).